Here is a 682-residue protein sequence, read N- to C-terminus: Nisin leader peptide-processing serine protease NisP (682 aa).

Positions 1-22 are cleaved as a signal peptide; it reads MKKILGFLFIVCSLGLSATVHG. A propeptide spanning residues 23 to 195 is cleaved from the precursor; that stretch reads ETTNSQQLLS…RKAKEVVSLR (173 aa). Residues 231 to 566 form the Peptidase S8 domain; the sequence is QWDMKYVTNN…VDLLNGKNKA (336 aa). Residues aspartate 259, histidine 306, and serine 512 each act as charge relay system in the active site. Positions 652–656 match the LPXTG sorting signal motif; sequence LPVTG. Residue threonine 655 is modified to Pentaglycyl murein peptidoglycan amidated threonine. A propeptide spans 656-682 (removed by sortase); it reads GDGEDFLPALGIVCISILGILKRKTKN.

This sequence belongs to the peptidase S8 family.

The protein localises to the secreted. It is found in the cell wall. Its pathway is antibiotic biosynthesis; nisin biosynthesis. In terms of biological role, cleaves the lantibiotic nisin precursor peptide. This Lactococcus lactis subsp. lactis (Streptococcus lactis) protein is Nisin leader peptide-processing serine protease NisP (nisP).